A 381-amino-acid polypeptide reads, in one-letter code: Phthiodiolone/phenolphthiodiolone dimycocerosates ketoreductase (381 aa).

This sequence belongs to the mer family. Phthiodiolone/phenolphthiodiolone dimycocerosates ketoreductase subfamily.

In terms of biological role, catalyzes the reduction of the keto moiety of phthiodiolone dimycocerosates (DIM B) and glycosylated phenolphthiodiolone dimycocerosates to form the intermediate compounds phthiotriol and glycosylated phenolphthiotriol dimycocerosates during phthiocerol dimycocerosates (DIM A) and glycosylated phenolphthiocerol dimycocerosates (PGL) biosynthesis. The sequence is that of Phthiodiolone/phenolphthiodiolone dimycocerosates ketoreductase from Mycobacterium bovis (strain ATCC BAA-935 / AF2122/97).